A 130-amino-acid chain; its full sequence is Small ribosomal subunit protein uS11c (130 aa).

Belongs to the universal ribosomal protein uS11 family. As to quaternary structure, part of the 30S ribosomal subunit.

It localises to the plastid. Its subcellular location is the chloroplast. The polypeptide is Small ribosomal subunit protein uS11c (Guillardia theta (Cryptophyte)).